The primary structure comprises 237 residues: Aspartate/glutamate leucyltransferase (237 aa).

Belongs to the R-transferase family. Bpt subfamily.

The protein resides in the cytoplasm. The enzyme catalyses N-terminal L-glutamyl-[protein] + L-leucyl-tRNA(Leu) = N-terminal L-leucyl-L-glutamyl-[protein] + tRNA(Leu) + H(+). The catalysed reaction is N-terminal L-aspartyl-[protein] + L-leucyl-tRNA(Leu) = N-terminal L-leucyl-L-aspartyl-[protein] + tRNA(Leu) + H(+). In terms of biological role, functions in the N-end rule pathway of protein degradation where it conjugates Leu from its aminoacyl-tRNA to the N-termini of proteins containing an N-terminal aspartate or glutamate. The protein is Aspartate/glutamate leucyltransferase of Shewanella amazonensis (strain ATCC BAA-1098 / SB2B).